Consider the following 1326-residue polypeptide: F-box/WD repeat-containing protein 7 (1326 aa).

Disordered regions lie at residues 1–58 (MERG…AEVG), 123–187 (DSSS…IEDE), 318–351 (TVSNPSPAASANAAAPEEASTSNSSSTSSSALSR), 399–549 (GSKA…SGCS), 615–642 (RSNPPAASGAGSVGANPTASVRQRRNGS), and 797–843 (TPRS…NPPP). The span at 9 to 39 (SSESVTSAGERTQSAVTSSTSTWVKSQASTS) shows a compositional bias: polar residues. The segment covering 165 to 187 (NDDDDDEEPEPEEDDEEELIEDE) has biased composition (acidic residues). Over residues 320–348 (SNPSPAASANAAAPEEASTSNSSSTSSSA) the composition is skewed to low complexity. Polar residues predominate over residues 403–464 (ANGSGTANSD…KLNLGSSLGA (62 aa)). Over residues 465–486 (SSCSQHRSGSSSTSKSMESSTS) the composition is skewed to low complexity. Residues 495 to 504 (VYTNTNSNDY) are compositionally biased toward polar residues. Low complexity-rich tracts occupy residues 510 to 520 (TTSGSSTSGGS), 528 to 546 (NVSASVSYSSVGSQTSQES), and 616 to 631 (SNPPAASGAGSVGANP). 2 stretches are compositionally biased toward polar residues: residues 632–642 (TASVRQRRNGS) and 797–824 (TPRSSQHLGPTAVLSVTPSSHLTSSTPG). T813 bears the Phosphothreonine mark. S825 carries the post-translational modification Phosphoserine. The F-box domain occupies 889-935 (RDFISLLPRELALFVLSYLEPKDLLRAAQTCRSWRFLCDDNLLWKEK). WD repeat units lie at residues 992-1030 (GHDDHVITCLQFSGNRIVSGSDDNTLKVWSAVNGKCLRT), 1033-1070 (GHTGGVWSSQMSGNIIISGSTDRTLKVWDMDSGACVHT), 1073-1110 (GHTSTVRCMHLHGSKVVSGSRDATLRVWDIEQGSCLHV), 1113-1150 (GHLAAVRCVQYDGKLIVSGAYDYMVKIWHPERQECLHT), 1153-1190 (GHTNRVYSLQFDGLHVVSGSLDTSIRVWDVETGNCKHT), 1193-1232 (GHQSLTSGMELRQNILVSGNADSTVKVWDITTGQCLQTLS), and 1236-1273 (KHHSAVTCLQFNSRFVVTSSDDGTVKLWDVKTGDFIRN).

As to quaternary structure, part of a SCF E3 ubiquitin-protein ligase complex. Interacts with Myc and puf. Interacts with CycE. Expressed in follicle cell epithelium and imaginal disks, particularly in the morphogenetic furrow.

The protein localises to the nucleus. It functions in the pathway protein modification; protein ubiquitination. Its function is as follows. Substrate recognition component of a SCF (SKP1-CUL1-F-box protein) E3 ubiquitin-protein ligase complex which mediates the ubiquitination and subsequent proteasomal degradation of target proteins. Probably recognizes and binds to phosphorylated target proteins. In the wing and eye, negatively regulates cell growth and proliferation by mediating the degradation of Myc and cyclin E, respectively. Required for endocycles, but not mitosis in follicle cell epithelium. This is F-box/WD repeat-containing protein 7 from Drosophila melanogaster (Fruit fly).